The chain runs to 280 residues: 2,3,4,5-tetrahydropyridine-2,6-dicarboxylate N-succinyltransferase (280 aa).

Belongs to the transferase hexapeptide repeat family.

The protein localises to the cytoplasm. The enzyme catalyses (S)-2,3,4,5-tetrahydrodipicolinate + succinyl-CoA + H2O = (S)-2-succinylamino-6-oxoheptanedioate + CoA. It participates in amino-acid biosynthesis; L-lysine biosynthesis via DAP pathway; LL-2,6-diaminopimelate from (S)-tetrahydrodipicolinate (succinylase route): step 1/3. This is 2,3,4,5-tetrahydropyridine-2,6-dicarboxylate N-succinyltransferase from Methylorubrum populi (strain ATCC BAA-705 / NCIMB 13946 / BJ001) (Methylobacterium populi).